The sequence spans 735 residues: Ribosomal protein S6 kinase alpha-1 (735 aa).

Residue Ser-54 is modified to Phosphoserine. A Protein kinase 1 domain is found at 62-321 (FELLKVLGQG…AEEIKRHIFY (260 aa)). Residues 68 to 76 (LGQGSFGKV) and Lys-94 each bind ATP. Asp-187 functions as the Proton acceptor in the catalytic mechanism. At Ser-221 the chain carries Phosphoserine; by PDPK1. Position 307 is a phosphoserine (Ser-307). Residues 322 to 391 (STIDWNKLYR…VATGLMEDDS (70 aa)) enclose the AGC-kinase C-terminal domain. At Thr-359 the chain carries Phosphothreonine. Residue Ser-363 is modified to Phosphoserine. A phosphoserine; by autocatalysis mark is found at Ser-369 and Ser-380. Residues 418–675 (YIVKETIGVG…AKQVLQHPWI (258 aa)) enclose the Protein kinase 2 domain. Residues 424 to 432 (IGVGSYSVC) and Lys-447 contribute to the ATP site. The active-site Proton acceptor is the Asp-535. Thr-573 is modified (phosphothreonine). Phosphoserine is present on Ser-732.

It belongs to the protein kinase superfamily. AGC Ser/Thr protein kinase family. S6 kinase subfamily. Forms a complex with either MAPK1/ERK2 or MAPK3/ERK1 in quiescent cells. Transiently dissociates following mitogenic stimulation. Interacts with ETV1/ER81 and FGFR1. Mg(2+) is required as a cofactor. Activated by phosphorylation at Ser-221 by PDPK1. Autophosphorylated on Ser-380, as part of the activation process. May be phosphorylated at Thr-359 and Ser-363 by MAPK1/ERK2 and MAPK3/ERK1. Post-translationally, N-terminal myristoylation results in an activated kinase in the absence of added growth factors.

Its subcellular location is the nucleus. The protein localises to the cytoplasm. The enzyme catalyses L-seryl-[protein] + ATP = O-phospho-L-seryl-[protein] + ADP + H(+). It carries out the reaction L-threonyl-[protein] + ATP = O-phospho-L-threonyl-[protein] + ADP + H(+). Upon extracellular signal or mitogen stimulation, phosphorylated at Thr-573 in the C-terminal kinase domain (CTKD) by MAPK1/ERK2 and MAPK3/ERK1. The activated CTKD then autophosphorylates Ser-380, allowing binding of PDPK1, which in turn phosphorylates Ser-221 in the N-terminal kinase domain (NTDK) leading to the full activation of the protein and subsequent phosphorylation of the substrates by the NTKD. Functionally, serine/threonine-protein kinase that acts downstream of ERK (MAPK1/ERK2 and MAPK3/ERK1) signaling and mediates mitogenic and stress-induced activation of the transcription factors CREB1, ETV1/ER81 and NR4A1/NUR77, regulates translation through RPS6 and EIF4B phosphorylation, and mediates cellular proliferation, survival, and differentiation by modulating mTOR signaling and repressing pro-apoptotic function of BAD and DAPK1. In fibroblast, is required for EGF-stimulated phosphorylation of CREB1, which results in the subsequent transcriptional activation of several immediate-early genes. In response to mitogenic stimulation (EGF and PMA), phosphorylates and activates NR4A1/NUR77 and ETV1/ER81 transcription factors and the cofactor CREBBP. Upon insulin-derived signal, acts indirectly on the transcription regulation of several genes by phosphorylating GSK3B at 'Ser-9' and inhibiting its activity. Phosphorylates RPS6 in response to serum or EGF via an mTOR-independent mechanism and promotes translation initiation by facilitating assembly of the pre-initiation complex. In response to insulin, phosphorylates EIF4B, enhancing EIF4B affinity for the EIF3 complex and stimulating cap-dependent translation. Is involved in the mTOR nutrient-sensing pathway by directly phosphorylating TSC2 at 'Ser-1798', which potently inhibits TSC2 ability to suppress mTOR signaling, and mediates phosphorylation of RPTOR, which regulates mTORC1 activity and may promote rapamycin-sensitive signaling independently of the PI3K/AKT pathway. Also involved in feedback regulation of mTORC1 and mTORC2 by phosphorylating DEPTOR. Mediates cell survival by phosphorylating the pro-apoptotic proteins BAD and DAPK1 and suppressing their pro-apoptotic function. Promotes the survival of hepatic stellate cells by phosphorylating CEBPB in response to the hepatotoxin carbon tetrachloride (CCl4). Mediates induction of hepatocyte prolifration by TGFA through phosphorylation of CEBPB. Is involved in cell cycle regulation by phosphorylating the CDK inhibitor CDKN1B, which promotes CDKN1B association with 14-3-3 proteins and prevents its translocation to the nucleus and inhibition of G1 progression. Phosphorylates EPHA2 at 'Ser-897', the RPS6KA-EPHA2 signaling pathway controls cell migration. In response to mTORC1 activation, phosphorylates EIF4B at 'Ser-406' and 'Ser-422' which stimulates bicarbonate cotransporter SLC4A7 mRNA translation, increasing SLC4A7 protein abundance and function. The protein is Ribosomal protein S6 kinase alpha-1 (Rps6ka1) of Rattus norvegicus (Rat).